We begin with the raw amino-acid sequence, 694 residues long: MAREYKIEDYRNFGIMAHIDAGKTTMTERILFYTGKNHKIGETHDGASTMDWMEQEQERGITITSAATTTFWEGRDGRKRRFNIIDTPGHVDFTIEVERSLRVLDGAIALLDANAGVEPQTETVWRQAEKYRVPRMVFVNKMDKIGADFYRSVEMVGSRLGAKALVVQLPIGAENDFEGVVDLVEMKALKWDGSIGAPAVIGEIPSDLKEKAEEYREKLIEMAVEVDEAAMEAYLEGVMPTNEQLVSLIRKGTVEVQFHPVLCGTAFKNKGVQPLLDAVVSYLPSPIDIPAIKGIDVKTEAETTRESSDDAPLSMLAFKIMNDPFVGSLTFCRIYSGKVHKGVSLENTVKKKKERLGRMLQMHSNSREDIEEAFAGDIVALAGLKETTTGDTLCDPLKPVILERMEFPEPVIEIAIEPKTKADQEKMGIALNRLAAEDPSFRVKSDEESGQTIIAGMGELHLDIIVDRMRREFKVEANVGQPQVAYRESITKTAEIDYTHKKQSGGAGQFARVKIVFEPHEGDDFIFESKIVGGAVPKEYIPGVQKGIESVMGSGPLAGFPMLGVKATLIDGGYHDVDSSVLAFEIAARAAFRDGAKKAGAQLLEPIMKVEVVTPDDYVGDVIGDLNSRRGQISGTEARGIATVVNAMVPLANMFGYVNTLRSMSQGRAQYTMQFDHYEPVPSAVALEIQKKYA.

Residues 8–287 (EDYRNFGIMA…AVVSYLPSPI (280 aa)) form the tr-type G domain. GTP-binding positions include 17–24 (AHIDAGKT), 86–90 (DTPGH), and 140–143 (NKMD).

This sequence belongs to the TRAFAC class translation factor GTPase superfamily. Classic translation factor GTPase family. EF-G/EF-2 subfamily.

The protein resides in the cytoplasm. Its function is as follows. Catalyzes the GTP-dependent ribosomal translocation step during translation elongation. During this step, the ribosome changes from the pre-translocational (PRE) to the post-translocational (POST) state as the newly formed A-site-bound peptidyl-tRNA and P-site-bound deacylated tRNA move to the P and E sites, respectively. Catalyzes the coordinated movement of the two tRNA molecules, the mRNA and conformational changes in the ribosome. This chain is Elongation factor G, found in Bartonella tribocorum (strain CIP 105476 / IBS 506).